Consider the following 199-residue polypeptide: dCTP deaminase (199 aa).

Residues 110–115, aspartate 128, 136–138, tyrosine 171, and glutamine 182 each bind dCTP; these read RSSLAR and VLE. Catalysis depends on glutamate 138, which acts as the Proton donor/acceptor.

It belongs to the dCTP deaminase family. As to quaternary structure, homotrimer.

It catalyses the reaction dCTP + H2O + H(+) = dUTP + NH4(+). Its pathway is pyrimidine metabolism; dUMP biosynthesis; dUMP from dCTP (dUTP route): step 1/2. In terms of biological role, catalyzes the deamination of dCTP to dUTP. This is dCTP deaminase from Pseudoalteromonas atlantica (strain T6c / ATCC BAA-1087).